The chain runs to 78 residues: MATLTDVRNALQNAWTDDMKKAVKNAYRNAEKRASQGGNYAKCLEQASMQGTPYSLAAKKCAIENNLASTLSGLWGTS.

In terms of assembly, homodimer.

The protein localises to the virion. In terms of biological role, completely wraps the viral circular dsDNA genome to form a nucleoprotein filament. These interactions between the viral genome and the nucleocapsid proteins probably maintain the DNA in A-form. This certainly protects the viral DNA under conditions such as the extreme desiccation of its host. This is Nucleocapsid VP1 from Sulfolobus (SPV1).